Consider the following 226-residue polypeptide: Fibrillarin-like rRNA/tRNA 2'-O-methyltransferase (226 aa).

S-adenosyl-L-methionine is bound by residues 85–86 (TT), 104–105 (EF), 129–130 (DA), and 149–152 (DVAQ).

The protein belongs to the methyltransferase superfamily. Fibrillarin family. Interacts with nop5. Component of box C/D small ribonucleoprotein (sRNP) particles that contain rpl7ae, FlpA and nop5, plus a guide RNA.

Its function is as follows. Involved in pre-rRNA and tRNA processing. Utilizes the methyl donor S-adenosyl-L-methionine to catalyze the site-specific 2'-hydroxyl methylation of ribose moieties in rRNA and tRNA. Site specificity is provided by a guide RNA that base pairs with the substrate. Methylation occurs at a characteristic distance from the sequence involved in base pairing with the guide RNA. The sequence is that of Fibrillarin-like rRNA/tRNA 2'-O-methyltransferase from Thermococcus onnurineus (strain NA1).